We begin with the raw amino-acid sequence, 479 residues long: Membrane-bound lytic murein transglycosylase F (479 aa).

The first 18 residues, Met1–Ala18, serve as a signal peptide directing secretion. Residues Ile19–Leu266 form a non-LT domain region. The segment at Asn267–Arg479 is LT domain. Glu311 is a catalytic residue.

The protein in the N-terminal section; belongs to the bacterial solute-binding protein 3 family. It in the C-terminal section; belongs to the transglycosylase Slt family.

It localises to the cell outer membrane. The catalysed reaction is Exolytic cleavage of the (1-&gt;4)-beta-glycosidic linkage between N-acetylmuramic acid (MurNAc) and N-acetylglucosamine (GlcNAc) residues in peptidoglycan, from either the reducing or the non-reducing ends of the peptidoglycan chains, with concomitant formation of a 1,6-anhydrobond in the MurNAc residue.. Functionally, murein-degrading enzyme that degrades murein glycan strands and insoluble, high-molecular weight murein sacculi, with the concomitant formation of a 1,6-anhydromuramoyl product. Lytic transglycosylases (LTs) play an integral role in the metabolism of the peptidoglycan (PG) sacculus. Their lytic action creates space within the PG sacculus to allow for its expansion as well as for the insertion of various structures such as secretion systems and flagella. This chain is Membrane-bound lytic murein transglycosylase F, found in Histophilus somni (strain 2336) (Haemophilus somnus).